The following is a 286-amino-acid chain: Shikimate dehydrogenase (NADP(+)) (286 aa).

Residues 21–23 (TLS) and Thr-68 each bind shikimate. Lys-72 functions as the Proton acceptor in the catalytic mechanism. Glu-84 contacts NADP(+). Residues Asn-93 and Asp-108 each coordinate shikimate. Residues 132–136 (GNGGA) and Leu-230 contribute to the NADP(+) site. Position 232 (Tyr-232) interacts with shikimate. Gly-253 is a binding site for NADP(+).

The protein belongs to the shikimate dehydrogenase family. As to quaternary structure, homodimer.

It carries out the reaction shikimate + NADP(+) = 3-dehydroshikimate + NADPH + H(+). Its pathway is metabolic intermediate biosynthesis; chorismate biosynthesis; chorismate from D-erythrose 4-phosphate and phosphoenolpyruvate: step 4/7. In terms of biological role, involved in the biosynthesis of the chorismate, which leads to the biosynthesis of aromatic amino acids. Catalyzes the reversible NADPH linked reduction of 3-dehydroshikimate (DHSA) to yield shikimate (SA). This chain is Shikimate dehydrogenase (NADP(+)), found in Microcystis aeruginosa (strain NIES-843 / IAM M-2473).